The chain runs to 87 residues: Small ribosomal subunit protein bS16c (87 aa).

This sequence belongs to the bacterial ribosomal protein bS16 family.

The protein resides in the plastid. It localises to the chloroplast. The polypeptide is Small ribosomal subunit protein bS16c (Zygnema circumcarinatum (Green alga)).